Here is a 452-residue protein sequence, read N- to C-terminus: Pup--protein ligase (452 aa).

Glutamate 9 lines the Mg(2+) pocket. Residue arginine 53 coordinates ATP. Residue tyrosine 55 participates in Mg(2+) binding. Residue aspartate 57 is the Proton acceptor of the active site. Position 63 (glutamate 63) interacts with Mg(2+). ATP contacts are provided by threonine 66 and tryptophan 419.

Belongs to the Pup ligase/Pup deamidase family. Pup-conjugating enzyme subfamily.

The catalysed reaction is ATP + [prokaryotic ubiquitin-like protein]-L-glutamate + [protein]-L-lysine = ADP + phosphate + N(6)-([prokaryotic ubiquitin-like protein]-gamma-L-glutamyl)-[protein]-L-lysine.. It functions in the pathway protein degradation; proteasomal Pup-dependent pathway. It participates in protein modification; protein pupylation. Its function is as follows. Catalyzes the covalent attachment of the prokaryotic ubiquitin-like protein modifier Pup to the proteasomal substrate proteins, thereby targeting them for proteasomal degradation. This tagging system is termed pupylation. The ligation reaction involves the side-chain carboxylate of the C-terminal glutamate of Pup and the side-chain amino group of a substrate lysine. This chain is Pup--protein ligase, found in Parafrankia sp. (strain EAN1pec).